The sequence spans 135 residues: Small ribosomal subunit protein bS16m/bS16c (135 aa).

The transit peptide at 1-7 (MVVRIRL) directs the protein to the chloroplast and mitochondrion. The interval 87–135 (PMVAMGRKGGARDTRPVDPMTGRYVDAENKTVNANDNQPKEEDTEAKSA) is disordered. The span at 124–135 (QPKEEDTEAKSA) shows a compositional bias: basic and acidic residues.

The protein belongs to the bacterial ribosomal protein bS16 family. In terms of assembly, component of the mitochondrial ribosome small subunit. As to expression, expressed at low levels in flowers, and, to a lower extent, in leaves, stems and roots.

The protein localises to the mitochondrion. It localises to the plastid. Its subcellular location is the chloroplast. This is Small ribosomal subunit protein bS16m/bS16c from Arabidopsis thaliana (Mouse-ear cress).